We begin with the raw amino-acid sequence, 389 residues long: Leucine aminopeptidase 1 (389 aa).

A signal peptide spans 1–18; it reads MKSAALLLPLYTAAFAAA. A propeptide spanning residues 19–89 is cleaved from the precursor; that stretch reads AFHHEHAQAV…TLNHRINAES (71 aa). N-linked (GlcNAc...) asparagine glycosylation is found at asparagine 99, asparagine 146, and asparagine 156. Positions 188, 207, 246, and 273 each coordinate Zn(2+). An intrachain disulfide couples cysteine 322 to cysteine 326. Histidine 355 is a Zn(2+) binding site.

This sequence belongs to the peptidase M28 family. M28E subfamily. In terms of assembly, monomer. The cofactor is Zn(2+).

The protein localises to the secreted. Extracellular aminopeptidase that allows assimilation of proteinaceous substrates. The sequence is that of Leucine aminopeptidase 1 (lap1) from Pyrenophora tritici-repentis (strain Pt-1C-BFP) (Wheat tan spot fungus).